We begin with the raw amino-acid sequence, 385 residues long: Centrosomal protein of 44 kDa (385 aa).

Positions 11-192 (RNLEQVLRSL…GANIPEDTVT (182 aa)) are binds with microtubules and centrioles. The interval 126–154 (LEKTPSQQRKKTSSAKSEPCSSTEKTSTE) is disordered. The segment covering 139-154 (SAKSEPCSSTEKTSTE) has biased composition (polar residues). Residues 230-271 (EVTALQSMLAECQEKLKKLTCIESRLESLEEKMKGKVLVNEK) are a coiled coil. The disordered stretch occupies residues 303-348 (SEDYSSSSDMDSLNPDRKSKEERHANIPLSSGYSTVSSDSTPRTST). The span at 305-314 (DYSSSSDMDS) shows a compositional bias: low complexity. A compositionally biased stretch (basic and acidic residues) spans 316–327 (NPDRKSKEERHA). The segment covering 332–342 (SSGYSTVSSDS) has biased composition (low complexity). Serine 342 is subject to Phosphoserine. Residue threonine 343 is modified to Phosphothreonine. Positions 358 to 381 (SEETTMQKMERMKKMFEETAELLK) form a coiled coil.

In terms of assembly, interacts with CROCC. Interacts with POC1B; the interaction is direct and recruits POC1B to centriolar microtubules. Binds to centriolar microtubules.

The protein localises to the cytoplasm. The protein resides in the cytoskeleton. It is found in the microtubule organizing center. Its subcellular location is the centrosome. It localises to the centriole. The protein localises to the spindle pole. The protein resides in the midbody. In terms of biological role, centriole-enriched microtubule-binding protein involved in centriole biogenesis. In collaboration with CEP295 and POC1B, is required for the centriole-to-centrosome conversion by ensuring the formation of bona fide centriole wall. Functions as a linker component that maintains centrosome cohesion. Associates with CROCC and regulates its stability and localization to the centrosome. This chain is Centrosomal protein of 44 kDa (CEP44), found in Bos taurus (Bovine).